The sequence spans 194 residues: Phosphoheptose isomerase (194 aa).

In terms of domain architecture, SIS spans Ile-37–Ala-194. Asn-52 to Gly-54 is a substrate binding site. Zn(2+) is bound by residues His-61 and Glu-65. Residues Glu-65, Asn-93–Asp-94, Ser-119–Ser-121, Ser-124, and Gln-172 contribute to the substrate site. Zn(2+)-binding residues include Gln-172 and His-180.

It belongs to the SIS family. GmhA subfamily. Homotetramer. Zn(2+) serves as cofactor.

Its subcellular location is the cytoplasm. The enzyme catalyses 2 D-sedoheptulose 7-phosphate = D-glycero-alpha-D-manno-heptose 7-phosphate + D-glycero-beta-D-manno-heptose 7-phosphate. It functions in the pathway carbohydrate biosynthesis; D-glycero-D-manno-heptose 7-phosphate biosynthesis; D-glycero-alpha-D-manno-heptose 7-phosphate and D-glycero-beta-D-manno-heptose 7-phosphate from sedoheptulose 7-phosphate: step 1/1. Functionally, catalyzes the isomerization of sedoheptulose 7-phosphate in D-glycero-D-manno-heptose 7-phosphate. The polypeptide is Phosphoheptose isomerase (Haemophilus influenzae (strain 86-028NP)).